The chain runs to 116 residues: Large ribosomal subunit protein bL17 (116 aa).

This sequence belongs to the bacterial ribosomal protein bL17 family. In terms of assembly, part of the 50S ribosomal subunit. Contacts protein L32.

The chain is Large ribosomal subunit protein bL17 from Prochlorococcus marinus (strain NATL2A).